The sequence spans 288 residues: Hydroxyethylthiazole kinase (288 aa).

Met-55 is a binding site for substrate. ATP contacts are provided by Asn-131 and Ser-177. Gly-204 contributes to the substrate binding site.

It belongs to the Thz kinase family. Mg(2+) is required as a cofactor.

The catalysed reaction is 5-(2-hydroxyethyl)-4-methylthiazole + ATP = 4-methyl-5-(2-phosphooxyethyl)-thiazole + ADP + H(+). It participates in cofactor biosynthesis; thiamine diphosphate biosynthesis; 4-methyl-5-(2-phosphoethyl)-thiazole from 5-(2-hydroxyethyl)-4-methylthiazole: step 1/1. In terms of biological role, catalyzes the phosphorylation of the hydroxyl group of 4-methyl-5-beta-hydroxyethylthiazole (THZ). In Haloquadratum walsbyi (strain DSM 16790 / HBSQ001), this protein is Hydroxyethylthiazole kinase.